The following is a 63-amino-acid chain: Cypmaclein (63 aa).

Belongs to the GASA family. Expressed in pollen (at protein level).

This chain is Cypmaclein, found in Juniperus ashei (Ozark white cedar).